The following is a 37-amino-acid chain: Large ribosomal subunit protein bL36 (37 aa).

This sequence belongs to the bacterial ribosomal protein bL36 family.

The polypeptide is Large ribosomal subunit protein bL36 (Caldicellulosiruptor saccharolyticus (strain ATCC 43494 / DSM 8903 / Tp8T 6331)).